We begin with the raw amino-acid sequence, 470 residues long: Glutamyl-tRNA reductase (470 aa).

Substrate-binding positions include 49 to 52 (TCNR), Ser-109, 114 to 116 (ESQ), and Gln-120. Cys-50 serves as the catalytic Nucleophile. 223–228 (GAGAVG) is a binding site for NADP(+).

The protein belongs to the glutamyl-tRNA reductase family. Homodimer.

It catalyses the reaction (S)-4-amino-5-oxopentanoate + tRNA(Glu) + NADP(+) = L-glutamyl-tRNA(Glu) + NADPH + H(+). Its pathway is porphyrin-containing compound metabolism; protoporphyrin-IX biosynthesis; 5-aminolevulinate from L-glutamyl-tRNA(Glu): step 1/2. Functionally, catalyzes the NADPH-dependent reduction of glutamyl-tRNA(Glu) to glutamate 1-semialdehyde (GSA). In Frankia alni (strain DSM 45986 / CECT 9034 / ACN14a), this protein is Glutamyl-tRNA reductase.